The following is a 490-amino-acid chain: Betaine aldehyde dehydrogenase (490 aa).

Positions 26, 27, and 93 each coordinate K(+). 150–152 is a binding site for NAD(+); sequence GAW. The active-site Charge relay system is Lys162. 176-179 lines the NAD(+) pocket; the sequence is KPSE. Position 180 (Val180) interacts with K(+). 230–233 serves as a coordination point for NAD(+); it reads GVAS. A K(+)-binding site is contributed by Leu246. The Proton acceptor role is filled by Glu252. Residues Gly254, Cys286, and Glu387 each coordinate NAD(+). Cys286 serves as the catalytic Nucleophile. Cys286 bears the Cysteine sulfenic acid (-SOH) mark. K(+) contacts are provided by Lys457 and Gly460. The active-site Charge relay system is the Glu464.

It belongs to the aldehyde dehydrogenase family. As to quaternary structure, dimer of dimers. The cofactor is K(+).

It catalyses the reaction betaine aldehyde + NAD(+) + H2O = glycine betaine + NADH + 2 H(+). It participates in amine and polyamine biosynthesis; betaine biosynthesis via choline pathway; betaine from betaine aldehyde: step 1/1. In terms of biological role, involved in the biosynthesis of the osmoprotectant glycine betaine. Catalyzes the irreversible oxidation of betaine aldehyde to the corresponding acid. This is Betaine aldehyde dehydrogenase from Escherichia coli O6:H1 (strain CFT073 / ATCC 700928 / UPEC).